Here is a 73-residue protein sequence, read N- to C-terminus: Putative defensin-like protein 57 (73 aa).

A signal peptide spans 1-25 (MRFTSMIFVLVVILINSLFNFNVLA). Disulfide bonds link C37/C71, C41/C64, C50/C69, and C54/C70.

The protein belongs to the DEFL family.

The protein resides in the secreted. The chain is Putative defensin-like protein 57 from Arabidopsis thaliana (Mouse-ear cress).